Here is a 325-residue protein sequence, read N- to C-terminus: uncharacterized protein (325 aa).

The helical transmembrane segment at 67–87 (WIPFFLLFSSVVVLGGLWWLG) threads the bilayer.

It localises to the membrane. This is an uncharacterized protein from Synechocystis sp. (strain ATCC 27184 / PCC 6803 / Kazusa).